The sequence spans 549 residues: Cilia- and flagella-associated protein 45 (549 aa).

Residues M1–T27 form a disordered region. Coiled coils occupy residues K119–V232 and I259–Q393. A disordered region spans residues R391–A416.

The protein belongs to the CFAP45 family. As to quaternary structure, microtubule inner protein component of sperm flagellar doublet microtubules. Interacts with AK8; dimerization with AK8 may create a cavity at the interface of the dimer that can accommodate AMP. Interacts with CFAP52. Interacts with ENKUR. Directly interacts with DNALI1. Interacts with DNAH11. Interacts with DNAI1. Expressed in trachea multiciliated cells.

Its subcellular location is the cytoplasm. The protein localises to the cytoskeleton. The protein resides in the cilium axoneme. It localises to the flagellum axoneme. It is found in the cell projection. Its subcellular location is the cilium. The protein localises to the flagellum. In terms of biological role, microtubule inner protein (MIP) part of the dynein-decorated doublet microtubules (DMTs) in cilia axoneme, which is required for motile cilia beating. It is an AMP-binding protein that may facilitate dynein ATPase-dependent ciliary and flagellar beating via adenine nucleotide homeostasis. May function as a donor of AMP to AK8 and hence promote ADP production. The chain is Cilia- and flagella-associated protein 45 from Bos taurus (Bovine).